Consider the following 723-residue polypeptide: Tripartite motif-containing protein 42 (723 aa).

An RING-type zinc finger spans residues 146 to 192 (CPMCNRLRLHSFMLPCNHSLCEKCLRQLQKHAEVTENFFILICPMCS). 2 B box-type zinc fingers span residues 235–280 (PILC…FVDT) and 285–326 (QDEK…TVSL). Zn(2+) contacts are provided by Cys-290, His-293, Cys-313, and His-318. The stretch at 382–412 (KLRAILQEKEKIIMEQIENLEVSRQKEIEKY) forms a coiled coil. The region spanning 434–492 (LKETGQVAFLQSAKILVDQIEEGIQNTFRPDPQLRLHSLHCIPLDFAELSNAIHELFPT) is the COS domain. Residues 603-701 (TPGPIVIYQT…DICKVVTPDG (99 aa)) form the Fibronectin type-III domain.

The protein belongs to the TRIM/RBCC family.

The sequence is that of Tripartite motif-containing protein 42 (Trim42) from Mus musculus (Mouse).